A 389-amino-acid polypeptide reads, in one-letter code: Tryptophan synthase beta chain (389 aa).

The residue at position 84 (Lys84) is an N6-(pyridoxal phosphate)lysine.

This sequence belongs to the TrpB family. In terms of assembly, tetramer of two alpha and two beta chains. The cofactor is pyridoxal 5'-phosphate.

The catalysed reaction is (1S,2R)-1-C-(indol-3-yl)glycerol 3-phosphate + L-serine = D-glyceraldehyde 3-phosphate + L-tryptophan + H2O. Its pathway is amino-acid biosynthesis; L-tryptophan biosynthesis; L-tryptophan from chorismate: step 5/5. Its function is as follows. The beta subunit is responsible for the synthesis of L-tryptophan from indole and L-serine. The chain is Tryptophan synthase beta chain from Methanococcus aeolicus (strain ATCC BAA-1280 / DSM 17508 / OCM 812 / Nankai-3).